Reading from the N-terminus, the 578-residue chain is Proline--tRNA ligase (578 aa).

It belongs to the class-II aminoacyl-tRNA synthetase family. ProS type 1 subfamily. As to quaternary structure, homodimer.

The protein resides in the cytoplasm. The catalysed reaction is tRNA(Pro) + L-proline + ATP = L-prolyl-tRNA(Pro) + AMP + diphosphate. Its function is as follows. Catalyzes the attachment of proline to tRNA(Pro) in a two-step reaction: proline is first activated by ATP to form Pro-AMP and then transferred to the acceptor end of tRNA(Pro). As ProRS can inadvertently accommodate and process non-cognate amino acids such as alanine and cysteine, to avoid such errors it has two additional distinct editing activities against alanine. One activity is designated as 'pretransfer' editing and involves the tRNA(Pro)-independent hydrolysis of activated Ala-AMP. The other activity is designated 'posttransfer' editing and involves deacylation of mischarged Ala-tRNA(Pro). The misacylated Cys-tRNA(Pro) is not edited by ProRS. The polypeptide is Proline--tRNA ligase (Burkholderia pseudomallei (strain K96243)).